The sequence spans 496 residues: Beta-amylase (496 aa).

Ala2 is modified (N-acetylalanine). Asp54, His94, and Asp102 together coordinate substrate. Glu187 (proton donor) is an active-site residue. Substrate-binding residues include Lys296, His301, and Thr343. Residue Glu381 is the Proton acceptor of the active site. Residues 382–383 (NA) and Arg421 contribute to the substrate site.

Belongs to the glycosyl hydrolase 14 family. As to quaternary structure, monomer.

The enzyme catalyses Hydrolysis of (1-&gt;4)-alpha-D-glucosidic linkages in polysaccharides so as to remove successive maltose units from the non-reducing ends of the chains.. The chain is Beta-amylase (BMY1) from Glycine max (Soybean).